We begin with the raw amino-acid sequence, 135 residues long: Cytochrome b5 (135 aa).

One can recognise a Cytochrome b5 heme-binding domain in the interval 4 to 80 (SKVYSLAEVS…MDEMCVGDID (77 aa)). Heme-binding residues include His39 and His63. Residues 106–126 (FIIKLLQFLVPLIILGVAVGI) form a helical membrane-spanning segment.

The protein belongs to the cytochrome b5 family.

The protein resides in the endoplasmic reticulum membrane. It localises to the microsome membrane. In terms of biological role, membrane bound hemoprotein which function as an electron carrier for several membrane bound oxygenases. The protein is Cytochrome b5 of Cuscuta reflexa (Southern Asian dodder).